The following is a 297-amino-acid chain: UTP--glucose-1-phosphate uridylyltransferase (297 aa).

The protein belongs to the UDPGP type 2 family.

It catalyses the reaction alpha-D-glucose 1-phosphate + UTP + H(+) = UDP-alpha-D-glucose + diphosphate. It participates in carbohydrate metabolism; nucleotide-sugar metabolism. The protein operates within bacterial outer membrane biogenesis; lipopolysaccharide biosynthesis. This Escherichia coli O157:H7 protein is UTP--glucose-1-phosphate uridylyltransferase (galF).